A 194-amino-acid polypeptide reads, in one-letter code: Large ribosomal subunit protein uL6x (194 aa).

Thr75 bears the Phosphothreonine mark.

The protein belongs to the universal ribosomal protein uL6 family.

This Arabidopsis thaliana (Mouse-ear cress) protein is Large ribosomal subunit protein uL6x (RPL9D).